Reading from the N-terminus, the 280-residue chain is Urease accessory protein UreD (280 aa).

Belongs to the UreD family. UreD, UreF and UreG form a complex that acts as a GTP-hydrolysis-dependent molecular chaperone, activating the urease apoprotein by helping to assemble the nickel containing metallocenter of UreC. The UreE protein probably delivers the nickel.

The protein resides in the cytoplasm. Functionally, required for maturation of urease via the functional incorporation of the urease nickel metallocenter. The chain is Urease accessory protein UreD from Vibrio parahaemolyticus.